A 482-amino-acid polypeptide reads, in one-letter code: tRNA sulfurtransferase (482 aa).

In terms of domain architecture, THUMP spans 61–165 (LAIRDALTRI…DDRLLLIKGR (105 aa)). ATP contacts are provided by residues 183–184 (LI), Lys265, Gly287, and Gln296. A disulfide bridge connects residues Cys344 and Cys456. In terms of domain architecture, Rhodanese spans 404-482 (FGPNDVILDI…GFNNVKVYRP (79 aa)). Cys456 (cysteine persulfide intermediate) is an active-site residue.

The protein belongs to the ThiI family.

It is found in the cytoplasm. It catalyses the reaction [ThiI sulfur-carrier protein]-S-sulfanyl-L-cysteine + a uridine in tRNA + 2 reduced [2Fe-2S]-[ferredoxin] + ATP + H(+) = [ThiI sulfur-carrier protein]-L-cysteine + a 4-thiouridine in tRNA + 2 oxidized [2Fe-2S]-[ferredoxin] + AMP + diphosphate. The enzyme catalyses [ThiS sulfur-carrier protein]-C-terminal Gly-Gly-AMP + S-sulfanyl-L-cysteinyl-[cysteine desulfurase] + AH2 = [ThiS sulfur-carrier protein]-C-terminal-Gly-aminoethanethioate + L-cysteinyl-[cysteine desulfurase] + A + AMP + 2 H(+). The protein operates within cofactor biosynthesis; thiamine diphosphate biosynthesis. Catalyzes the ATP-dependent transfer of a sulfur to tRNA to produce 4-thiouridine in position 8 of tRNAs, which functions as a near-UV photosensor. Also catalyzes the transfer of sulfur to the sulfur carrier protein ThiS, forming ThiS-thiocarboxylate. This is a step in the synthesis of thiazole, in the thiamine biosynthesis pathway. The sulfur is donated as persulfide by IscS. The polypeptide is tRNA sulfurtransferase (Shigella sonnei (strain Ss046)).